A 1476-amino-acid polypeptide reads, in one-letter code: ABC-type transporter FG02316 (1476 aa).

N2 is a glycosylation site (N-linked (GlcNAc...) asparagine). Transmembrane regions (helical) follow at residues 23 to 43 (FTLL…LLLA), 64 to 84 (WLYC…AFLV), 97 to 117 (SLPA…LSYV), 156 to 176 (AAIT…AETI), 266 to 286 (ILFI…QPFL), 305 to 325 (QGYG…VTTG), 384 to 404 (VWAN…QLGL), 407 to 427 (LIPV…VSFV), 485 to 505 (LLIW…VLSF), and 532 to 552 (LFAL…SFMG). The region spanning 274 to 552 (LCFIGFTFCQ…FVTSLSSFMG (279 aa)) is the ABC transmembrane type-1 1 domain. Residues 586–615 (ISGVSSSEEKHPVSPIQESMMKTEPSGDSP) are disordered. The 226-residue stretch at 622 to 847 (IRNASFGYDR…SDNYVSHSDV (226 aa)) folds into the ABC transporter 1 domain. N624 is a glycosylation site (N-linked (GlcNAc...) asparagine). 654–661 (GPVGSGKS) contributes to the ATP binding site. N-linked (GlcNAc...) asparagine glycans are attached at residues N682, N696, N798, and N836. The interval 842-870 (VSHSDVSSPDGARSKAPSSGPASSSAPVP) is disordered. Positions 855 to 870 (SKAPSSGPASSSAPVP) are enriched in low complexity. 6 helical membrane passes run 906 to 926 (MNAI…AYIF), 950 to 970 (LGYY…FLVL), 1021 to 1041 (LIDM…VLCI), 1045 to 1065 (ILIA…LATL), 1137 to 1157 (WLTL…VVLV), and 1167 to 1187 (GLIG…KLLM). The ABC transmembrane type-1 2 domain maps to 916 to 1195 (VFVLAICAYI…LMTFWTTLET (280 aa)). An ABC transporter 2 domain is found at 1232–1464 (ILFDQVSAGY…GPDASTFASM (233 aa)). Residue N1250 is glycosylated (N-linked (GlcNAc...) asparagine). 1265 to 1272 (GRTGSGKS) contacts ATP. Residue N1414 is glycosylated (N-linked (GlcNAc...) asparagine).

This sequence belongs to the ABC transporter superfamily. ABCC family. Conjugate transporter (TC 3.A.1.208) subfamily.

It localises to the cell membrane. In terms of biological role, ABC-type transporter; part of the gene cluster that mediates the biosynthesis of the fusahexin, a cyclic hydrophobic hexapeptide with the amino acid sequence cyclo-(D-Ala-L-Leu-D-allo-Thr-L-Pro-D-Leu-L-Leu) that plays an important role in cell surface hydrophobicity. This Gibberella zeae (strain ATCC MYA-4620 / CBS 123657 / FGSC 9075 / NRRL 31084 / PH-1) (Wheat head blight fungus) protein is ABC-type transporter FG02316.